Reading from the N-terminus, the 247-residue chain is MLPSQEASKLYHEHYMRNSRAIGVLWAIFTICFAIINVVVFIQPYWVGDSVSTPKPGYFGLFHYCVGSGLAGRELTCRGSFTDFSTIPSSAFKAAAFFVLLSMVLILGCITCFSLFFFCNTATVYKICAWMQLLAALCLVLGCMIFPDGWDAETIRDMCGAKTGKYSLGDCSVRWAYILAIIGILNALILSFLAFVLGNRQTDLLQEELKPENKDFVGSTVSSVLRPGGDVSGWGVLPCPVAHSQGP.

Helical transmembrane passes span 22 to 42, 97 to 117, 127 to 147, and 178 to 198; these read IGVLWAIFTICFAIINVVVFI, FFVLLSMVLILGCITCFSLFF, ICAWMQLLAALCLVLGCMIFP, and ILAIIGILNALILSFLAFVLG.

The protein belongs to the LHFP family. Interacts with GABA(A) receptor subunits. Identified in a complex of 720 kDa composed of LHFPL4, NLGN2, GABRA1, GABRB2, GABRG2 and GABRB3. Interacts with GABRB3. Interacts with GABRA2. Interacts with GABRG2. Interacts with GABRA1. Interacts with NLGN2; leading to mutual regulation of protein level and synaptic clustering.

The protein resides in the cell projection. It localises to the dendrite. It is found in the postsynaptic cell membrane. Its function is as follows. Plays a role in the regulation of inhibitory synapse formation and function by being involved in maintening gamma-aminobutyric acid receptors (GABAARs) clustering and their associated scaffold proteins at inhibitory synaptic sites. Acts in concert with NLGN2 to recruit or stabilize GABAARs. The sequence is that of LHFPL tetraspan subfamily member 4 protein from Homo sapiens (Human).